The chain runs to 1001 residues: Kinesin-like protein KIN-14P (1001 aa).

The Calponin-homology (CH) domain occupies 53-172 (AIRRYEAANW…CVLSLRSFSE (120 aa)). Positions 284–300 (NESVKHALDPNDDKLLS) are enriched in basic and acidic residues. Residues 284 to 322 (NESVKHALDPNDDKLLSRADTPPEMESTCTCSTGNMDEE) form a disordered region. One can recognise a Kinesin motor domain in the interval 426–748 (NIRVYCRVRP…LKFAERVATV (323 aa)). 509–516 (GQTGSGKT) provides a ligand contact to ATP. A coiled-coil region spans residues 756–784 (NKEGGEVKELKEQIACLKAALAKKDGETE). Disordered regions lie at residues 804 to 830 (PPAF…QKKR) and 890 to 1001 (EPQW…SAKK). Residues 972–984 (PSASTKNGKQLSL) show a composition bias toward polar residues.

It belongs to the TRAFAC class myosin-kinesin ATPase superfamily. Kinesin family. KIN-14 subfamily.

The chain is Kinesin-like protein KIN-14P from Oryza sativa subsp. japonica (Rice).